The chain runs to 168 residues: uncharacterized protein (168 aa).

Positions 1–15 (MKRIISSSKSLKQLS) are enriched in low complexity. The tract at residues 1–107 (MKRIISSSKS…NNNNNNNNNN (107 aa)) is disordered. Over residues 33 to 47 (SDSDSDSDSDSDSDS) the composition is skewed to acidic residues. Over residues 48 to 107 (DSNSNSNSNSNSNSNSNSNSNSNSNSNNNNNNTNNNNNNNNNNNNNNNNNNNNNNNNNNN) the composition is skewed to low complexity.

This is an uncharacterized protein from Dictyostelium discoideum (Social amoeba).